Reading from the N-terminus, the 1074-residue chain is Zinc finger protein 518B (1074 aa).

Residues 12 to 24 (HLNGGHNSLTMSP) show a composition bias toward polar residues. Residues 12 to 36 (HLNGGHNSLTMSPKQPDANGAPRPN) form a disordered region. C2H2-type zinc fingers lie at residues 162–184 (FICS…LVKH) and 190–213 (YQCE…KRVH). Glycyl lysine isopeptide (Lys-Gly) (interchain with G-Cter in SUMO2) cross-links involve residues Lys482, Lys491, and Lys558. The disordered stretch occupies residues 568–590 (SNRKQEDNQTEEHKAVSTVGQIS). Residues 570 to 582 (RKQEDNQTEEHKA) are compositionally biased toward basic and acidic residues. Lys594 participates in a covalent cross-link: Glycyl lysine isopeptide (Lys-Gly) (interchain with G-Cter in SUMO2). Disordered stretches follow at residues 603-632 (TGED…DGPV) and 678-704 (KPSS…KATS). The segment covering 604–622 (GEDRSQQPGDKPLELKNSE) has biased composition (basic and acidic residues). Polar residues predominate over residues 693-704 (GQASKGTSKATS). Glycyl lysine isopeptide (Lys-Gly) (interchain with G-Cter in SUMO2) cross-links involve residues Lys809, Lys846, and Lys860. A C2H2-type 3 zinc finger spans residues 1036 to 1058 (FKCWFCGRLYEDQEEWMSHGQRH).

It belongs to the krueppel C2H2-type zinc-finger protein family.

It is found in the nucleus. In terms of biological role, through its association with the EHMT1-EHMT2/G9A and PRC2/EED-EZH2 histone methyltransferase complexes may function in gene silencing, regulating repressive post-translational methylation of histone tails at promoters of target genes. The polypeptide is Zinc finger protein 518B (ZNF518B) (Homo sapiens (Human)).